A 469-amino-acid polypeptide reads, in one-letter code: Protein translocase subunit SecY (469 aa).

The Cytoplasmic portion of the chain corresponds to 1-20; it reads MSFIDSLATLGQYLPAVTKP. The chain crosses the membrane as a helical span at residues 21 to 47; it reads KEKPSLGQKLVWSLVAVIIYLIMASTP. The Extracellular segment spans residues 48–59; sequence LYGITSASFFKN. An intramembrane region (helical) is located at residues 60–67; sequence LILEQIIF. Residues 60 to 88 traverse the membrane as a discontinuously helical segment; that stretch reads LILEQIIFASTTGTLAQLGIGPIITAGLI. Residues 68–79 lie within the membrane without spanning it; it reads ASTTGTLAQLGI. Positions 80–88 form an intramembrane region, helical; it reads GPIITAGLI. The Cytoplasmic portion of the chain corresponds to 89–109; the sequence is MQILAGSKLISIDLNDPDDRV. A helical membrane pass occupies residues 110-131; the sequence is KFTEAQKGLAFIFILVESALFG. The Extracellular segment spans residues 132-146; the sequence is YVLARTSTTINASIL. Residues 147–171 form a helical membrane-spanning segment; the sequence is FIAGIVIAQLIVATYLILLLDELIQ. Over 172–178 the chain is Cytoplasmic; the sequence is KGWGLGS. Residues 179–197 traverse the membrane as a helical segment; sequence GVSLFILAGVMKIMFWDMF. The Extracellular segment spans residues 198 to 240; the sequence is GIASVSSQNLPIGFFPALFTALASHSDVLNLIVNTSTKNLFQP. A helical membrane pass occupies residues 241 to 262; the sequence is DLVGLVTTIALIIITIYLTTMT. The Cytoplasmic segment spans residues 263-287; it reads IEIPVTSQKLRGIRRTIPLNFLYVS. A helical membrane pass occupies residues 288–309; the sequence is SIPVIFVAVLGSDIQLFASLAS. Residues 310–347 lie on the Extracellular side of the membrane; sequence YVSPSASNILNTVSGVFFFPPPNSAIPHSIYAVVLDPL. The helical transmembrane segment at 348–367 threads the bilayer; sequence GALEYAVVFIVLSILFGILW. The Cytoplasmic portion of the chain corresponds to 368–410; sequence VDVAGLDPATQAQQLVEAGIEIPGVRNNPKIIEGILARYIYPL. The chain crosses the membrane as a helical span at residues 411–429; the sequence is AFFSSIIVGLIAVFATLLG. At 430-432 the chain is on the extracellular side; it reads AYG. The helical transmembrane segment at 433–447 threads the bilayer; the sequence is TGIGILLAVTIAIQY. The Cytoplasmic portion of the chain corresponds to 448–469; that stretch reads YSLLAYERSLEMYPLLKRLIGE.

Belongs to the SecY/SEC61-alpha family. Component of the Sec protein translocase complex. Heterotrimer consisting of alpha (SecY), beta (SecG) and gamma (SecE) subunits. The heterotrimers can form oligomers, although 1 heterotrimer is thought to be able to translocate proteins. Interacts with the ribosome. May interact with SecDF, and other proteins may be involved.

The protein resides in the cell membrane. In terms of biological role, the central subunit of the protein translocation channel SecYEG. Consists of two halves formed by TMs 1-5 and 6-10. These two domains form a lateral gate at the front which open onto the bilayer between TMs 2 and 7, and are clamped together by SecE at the back. The channel is closed by both a pore ring composed of hydrophobic SecY resides and a short helix (helix 2A) on the extracellular side of the membrane which forms a plug. The plug probably moves laterally to allow the channel to open. The ring and the pore may move independently. This is Protein translocase subunit SecY from Saccharolobus solfataricus (strain ATCC 35092 / DSM 1617 / JCM 11322 / P2) (Sulfolobus solfataricus).